Here is an 82-residue protein sequence, read N- to C-terminus: UPF0337 protein PP_2059 (82 aa).

It belongs to the UPF0337 (CsbD) family.

In Pseudomonas putida (strain ATCC 47054 / DSM 6125 / CFBP 8728 / NCIMB 11950 / KT2440), this protein is UPF0337 protein PP_2059.